Reading from the N-terminus, the 187-residue chain is Protein GrpE (187 aa).

Positions 1 to 22 (MADEQNLDAQAQDQAAEAGAGD) are disordered. Residues 7-22 (LDAQAQDQAAEAGAGD) are compositionally biased toward low complexity.

This sequence belongs to the GrpE family. In terms of assembly, homodimer.

The protein resides in the cytoplasm. Participates actively in the response to hyperosmotic and heat shock by preventing the aggregation of stress-denatured proteins, in association with DnaK and GrpE. It is the nucleotide exchange factor for DnaK and may function as a thermosensor. Unfolded proteins bind initially to DnaJ; upon interaction with the DnaJ-bound protein, DnaK hydrolyzes its bound ATP, resulting in the formation of a stable complex. GrpE releases ADP from DnaK; ATP binding to DnaK triggers the release of the substrate protein, thus completing the reaction cycle. Several rounds of ATP-dependent interactions between DnaJ, DnaK and GrpE are required for fully efficient folding. The sequence is that of Protein GrpE from Pseudomonas syringae pv. tomato (strain ATCC BAA-871 / DC3000).